The following is a 294-amino-acid chain: ATP synthase gamma chain (294 aa).

This sequence belongs to the ATPase gamma chain family. F-type ATPases have 2 components, CF(1) - the catalytic core - and CF(0) - the membrane proton channel. CF(1) has five subunits: alpha(3), beta(3), gamma(1), delta(1), epsilon(1). CF(0) has three main subunits: a, b and c.

Its subcellular location is the cell inner membrane. Produces ATP from ADP in the presence of a proton gradient across the membrane. The gamma chain is believed to be important in regulating ATPase activity and the flow of protons through the CF(0) complex. This Rhizobium rhizogenes (strain K84 / ATCC BAA-868) (Agrobacterium radiobacter) protein is ATP synthase gamma chain.